Here is a 157-residue protein sequence, read N- to C-terminus: MQFMLLFSRQGKLRLQKWYVPLSDKEKKKITRELVQTVLARKPKMCSFLEWRDLKIVYKRYASLYFCCAIEDQDNELITLEIIHRYVELLDKYFGSVCELDIIFNFEKAYFILDEFLLGGEVQETSKKNVLKAIEQADLLQEEAETPRSVLEEIGLT.

It belongs to the adaptor complexes small subunit family. As to quaternary structure, adaptor protein complex 1 (AP-1) is a heterotetramer composed of two large adaptins (gamma-type subunit AP1G1 and beta-type subunit AP1B1), a medium adaptin (mu-type subunit AP1M1 or AP1M2) and a small adaptin (sigma-type subunit AP1S1 or AP1S2 or AP1S3). Binds to MUC1. In terms of tissue distribution, widely expressed.

It localises to the golgi apparatus. The protein localises to the cytoplasmic vesicle membrane. The protein resides in the membrane. Its subcellular location is the clathrin-coated pit. Its function is as follows. Subunit of clathrin-associated adaptor protein complex 1 that plays a role in protein sorting in the late-Golgi/trans-Golgi network (TGN) and/or endosomes. The AP complexes mediate both the recruitment of clathrin to membranes and the recognition of sorting signals within the cytosolic tails of transmembrane cargo molecules. The sequence is that of AP-1 complex subunit sigma-2 (AP1S2) from Homo sapiens (Human).